The following is a 312-amino-acid chain: Ribonuclease Z (312 aa).

Zn(2+)-binding residues include His-61, His-63, Asp-65, His-66, His-148, Asp-216, and His-275. Asp-65 functions as the Proton acceptor in the catalytic mechanism.

This sequence belongs to the RNase Z family. As to quaternary structure, homodimer. Zn(2+) serves as cofactor.

It carries out the reaction Endonucleolytic cleavage of RNA, removing extra 3' nucleotides from tRNA precursor, generating 3' termini of tRNAs. A 3'-hydroxy group is left at the tRNA terminus and a 5'-phosphoryl group is left at the trailer molecule.. Functionally, zinc phosphodiesterase, which displays some tRNA 3'-processing endonuclease activity. Probably involved in tRNA maturation, by removing a 3'-trailer from precursor tRNA. This is Ribonuclease Z from Clostridium tetani (strain Massachusetts / E88).